The sequence spans 325 residues: Cln5-like protein 2 (325 aa).

Residues 1-19 (MNKLIFIIICLGIVDKTIS) form the signal peptide. N-linked (GlcNAc...) asparagine glycans are attached at residues Asn88, Asn117, Asn133, Asn163, Asn182, Asn189, Asn238, and Asn262.

The protein belongs to the CLN5 family.

The protein is Cln5-like protein 2 (cln5lb) of Dictyostelium discoideum (Social amoeba).